The chain runs to 57 residues: MGAEVFHSLKKVLGEKGLASGVGDEGGFAPNLGSNIRRAGYTAVISHRVAKYNQLLR.

The active-site Proton donor is the E25.

It belongs to the enolase family. It depends on Mg(2+) as a cofactor.

Its subcellular location is the cytoplasm. It localises to the secreted. The protein localises to the cell surface. The enzyme catalyses (2R)-2-phosphoglycerate = phosphoenolpyruvate + H2O. Its pathway is carbohydrate degradation; glycolysis; pyruvate from D-glyceraldehyde 3-phosphate: step 4/5. Functionally, catalyzes the reversible conversion of 2-phosphoglycerate (2-PG) into phosphoenolpyruvate (PEP). It is essential for the degradation of carbohydrates via glycolysis. In Clostridioides difficile (Peptoclostridium difficile), this protein is Enolase.